The chain runs to 543 residues: Serine/threonine-protein kinase PkaA (543 aa).

The region spanning 8-276 is the Protein kinase domain; the sequence is YLLEEPLGRG…ENLARGLRVV (269 aa). ATP-binding positions include 14-22 and Lys-48; that span reads LGRGATGTV. The Proton acceptor role is filled by Asp-142. The tract at residues 303–480 is disordered; that stretch reads PAPAQVPGAP…RQRSANPMRI (178 aa). The segment covering 352–361 has biased composition (pro residues); sequence VMPPVPPGQP. 2 stretches are compositionally biased toward low complexity: residues 407 to 420 and 428 to 451; these read RQVS…RQAP and PGYG…QPQR. Over residues 452–461 the composition is skewed to pro residues; the sequence is YAPPPAPEPQ.

The protein belongs to the protein kinase superfamily. Ser/Thr protein kinase family. In terms of processing, autophosphorylated mainly at Thr and slightly at Ser.

It catalyses the reaction L-seryl-[protein] + ATP = O-phospho-L-seryl-[protein] + ADP + H(+). The enzyme catalyses L-threonyl-[protein] + ATP = O-phospho-L-threonyl-[protein] + ADP + H(+). In Streptomyces coelicolor (strain ATCC BAA-471 / A3(2) / M145), this protein is Serine/threonine-protein kinase PkaA (pkaA).